Here is a 518-residue protein sequence, read N- to C-terminus: FAD-dependent monooxygenase tpcD (518 aa).

The first 22 residues, 1 to 22 (MQLLGTLSWLYAIQASIGSSKA), serve as a signal peptide directing secretion. Residue Asn-61 is glycosylated (N-linked (GlcNAc...) asparagine). The FAD-binding PCMH-type domain maps to 75–246 (QSAQPACLVH…TRFDLDVFQQ (172 aa)). His-112 bears the Pros-8alpha-FAD histidine mark. Asn-163, Asn-208, Asn-216, and Asn-346 each carry an N-linked (GlcNAc...) asparagine glycan.

This sequence belongs to the oxygen-dependent FAD-linked oxidoreductase family. The cofactor is FAD.

Its pathway is secondary metabolite biosynthesis; terpenoid biosynthesis. Its function is as follows. FAD-dependent monooxygenase; part of the gene cluster that mediates the biosynthesis of terpestacin. The bifunctional terpene synthase tpcA converts isopentenyl diphosphate (IPP) and dimethylallyl diphosphate (DMAPP) into the sesterterpene preterpestacin I. The C-terminal prenyltransferase (PT) domain of tpcA catalyzes formation of GFPP, whereas the N-terminal terpene cyclase (TC) domain catalyzes the cyclization of GFPP into preterpestacin I. The cytochrome P450 monooxygenase tpcB then hydroxylates preterpestacin I to yield 24-hydroxypreterpstacin I (renamed as preterpestacin II) whereas the cytochrome P450 monooxygenase tpcC further hydroxylates preterpestacin II to yield 16,17-dihydroxypreterpestacin II (renamed as preterpestacin III). Finally, the FAD-dependent monooxygenase tpcD converts preterpestacin III into terpestacin. The sequence is that of FAD-dependent monooxygenase tpcD from Cochliobolus heterostrophus (strain C5 / ATCC 48332 / race O) (Southern corn leaf blight fungus).